The sequence spans 154 residues: MGRNKGIEQKVWPLAERVGGELNLEVVDVEFVKEAGRYFLRIYIDKDEGVDLDDCQNFSERIGVILDEEDPIPQSYYLEVSSPGIERPLKKLADFEKFAGREAQIKTFAAIEGQKQFKGKLLGVRDGQVVIDAGKGEVQIPLEQIAKANLTFDF.

This sequence belongs to the RimP family.

It is found in the cytoplasm. Required for maturation of 30S ribosomal subunits. This Carboxydothermus hydrogenoformans (strain ATCC BAA-161 / DSM 6008 / Z-2901) protein is Ribosome maturation factor RimP.